Reading from the N-terminus, the 137-residue chain is Nucleoside diphosphate kinase (137 aa).

ATP is bound by residues K10, F59, R87, T93, R104, and N114. The active-site Pros-phosphohistidine intermediate is the H117.

This sequence belongs to the NDK family. Homotetramer. Mg(2+) is required as a cofactor.

It is found in the cytoplasm. It carries out the reaction a 2'-deoxyribonucleoside 5'-diphosphate + ATP = a 2'-deoxyribonucleoside 5'-triphosphate + ADP. The enzyme catalyses a ribonucleoside 5'-diphosphate + ATP = a ribonucleoside 5'-triphosphate + ADP. Functionally, major role in the synthesis of nucleoside triphosphates other than ATP. The ATP gamma phosphate is transferred to the NDP beta phosphate via a ping-pong mechanism, using a phosphorylated active-site intermediate. This Streptomyces coelicolor (strain ATCC BAA-471 / A3(2) / M145) protein is Nucleoside diphosphate kinase.